The sequence spans 218 residues: MPGRQRRDGGNGPAGQNSNGPEGRDNRRGGGDRRGGGDRRDNAAEKNQLERVVAINRVSKVVKGGRRFSFTALVIVGDGNGLVGVGYGKAKEVPAAIQKGVEEARKGFFRVPMIGSTITHPVQGEAAAGVVMLRPASPGTGVIAGGAARAVLECAGIHDILAKSLGSDNAINVVHATVAALKQLQRPEEVAARRGLPLEDVAPAGMLRARAQAAGGAR.

The interval 1-45 (MPGRQRRDGGNGPAGQNSNGPEGRDNRRGGGDRRGGGDRRDNAAE) is disordered. Basic and acidic residues predominate over residues 22-45 (EGRDNRRGGGDRRGGGDRRDNAAE). Residues 48-111 (QLERVVAINR…EEARKGFFRV (64 aa)) form the S5 DRBM domain.

The protein belongs to the universal ribosomal protein uS5 family. Part of the 30S ribosomal subunit. Contacts proteins S4 and S8.

Its function is as follows. With S4 and S12 plays an important role in translational accuracy. Located at the back of the 30S subunit body where it stabilizes the conformation of the head with respect to the body. This chain is Small ribosomal subunit protein uS5, found in Nocardia farcinica (strain IFM 10152).